A 105-amino-acid chain; its full sequence is MKRGLRNGVAPCIPVAFCRDAGSAGHGATEAARPERSLQARGFASGMEARQGGDNFAGSVHDSRPARGDARKRHCQENNKTDRNQGSSNQSQNRRKKRIIKGKVM.

Positions 22-105 are disordered; it reads GSAGHGATEA…KKRIIKGKVM (84 aa). Over residues 61–83 the composition is skewed to basic and acidic residues; sequence HDSRPARGDARKRHCQENNKTDR. A compositionally biased stretch (basic residues) spans 93–105; sequence NRRKKRIIKGKVM.

This is an uncharacterized protein from Escherichia coli (strain K12).